A 142-amino-acid chain; its full sequence is Cell division protein SepF (142 aa).

The span at 21–31 shows a compositional bias: acidic residues; the sequence is ETTTVEEEREE. A disordered region spans residues 21–46; sequence ETTTVEEEREEQESSHKRQPAISRTN.

Belongs to the SepF family. As to quaternary structure, homodimer. Interacts with FtsZ.

The protein resides in the cytoplasm. Its function is as follows. Cell division protein that is part of the divisome complex and is recruited early to the Z-ring. Probably stimulates Z-ring formation, perhaps through the cross-linking of FtsZ protofilaments. Its function overlaps with FtsA. This is Cell division protein SepF from Brevibacillus brevis (strain 47 / JCM 6285 / NBRC 100599).